We begin with the raw amino-acid sequence, 309 residues long: Probable manganese-dependent inorganic pyrophosphatase (309 aa).

6 residues coordinate Mn(2+): histidine 9, aspartate 13, aspartate 15, aspartate 75, histidine 97, and aspartate 149.

This sequence belongs to the PPase class C family. Mn(2+) serves as cofactor.

It is found in the cytoplasm. The catalysed reaction is diphosphate + H2O = 2 phosphate + H(+). The chain is Probable manganese-dependent inorganic pyrophosphatase from Exiguobacterium sp. (strain ATCC BAA-1283 / AT1b).